Consider the following 191-residue polypeptide: C-type lectin domain family 2 member D (191 aa).

The Cytoplasmic portion of the chain corresponds to 1–38; sequence MHDSNNVEKDITPSELPANPGCLHSKEHSIKATLIWRL. A helical; Signal-anchor for type II membrane protein membrane pass occupies residues 39 to 59; that stretch reads FFLIMFLTIIVCGMVAALSAI. Over 60 to 191 the chain is Extracellular; it reads RANCHQEPSV…WICSKSDIHV (132 aa). A disulfide bridge links C75 with C86. In terms of domain architecture, C-type lectin spans 82–185; the sequence is FQRKCFYFSD…HYTERKWICS (104 aa). N-linked (GlcNAc...) asparagine glycosylation is found at N95 and N147. C103 and C184 form a disulfide bridge.

As to quaternary structure, homodimer; disulfide-linked. N-glycosylated. In terms of tissue distribution, detected in peripheral blood leukocytes, osteoblasts, lymph node, thymus and spleen. Isoform 1, isoform 2 and isoform 4 are expressed in T- and B-lymphocytes, and at lower levels in NK cells. They are also expressed in B-cell lines and LPS-matured monocyte-derived dendritic cells.

Its subcellular location is the cell membrane. The protein resides in the endoplasmic reticulum. In terms of biological role, receptor for KLRB1 that protects target cells against natural killer cell-mediated lysis. Inhibits osteoclast formation. Inhibits bone resorption. Modulates the release of interferon-gamma. Binds high molecular weight sulfated glycosaminoglycans. This Homo sapiens (Human) protein is C-type lectin domain family 2 member D (CLEC2D).